The chain runs to 173 residues: NADH-ubiquinone oxidoreductase chain 6 (173 aa).

The next 5 helical transmembrane spans lie at 1-21, 27-47, 53-73, 86-106, and 139-159; these read MTYI…AVAS, FAAL…VGYG, LVLF…SAAL, SVLG…GWFW, and YGGG…FVVL.

The protein belongs to the complex I subunit 6 family.

It is found in the mitochondrion membrane. It catalyses the reaction a ubiquinone + NADH + 5 H(+)(in) = a ubiquinol + NAD(+) + 4 H(+)(out). Its function is as follows. Core subunit of the mitochondrial membrane respiratory chain NADH dehydrogenase (Complex I) that is believed to belong to the minimal assembly required for catalysis. Complex I functions in the transfer of electrons from NADH to the respiratory chain. The immediate electron acceptor for the enzyme is believed to be ubiquinone. This is NADH-ubiquinone oxidoreductase chain 6 (MT-ND6) from Salmo salar (Atlantic salmon).